Consider the following 421-residue polypeptide: Testin (421 aa).

Residues 92-199 enclose the PET domain; the sequence is MILTNPVAAK…GDVKLPCEMD (108 aa). LIM zinc-binding domains follow at residues 234–297, 299–359, and 362–421; these read YSCY…CDSE, PRCA…NHAV, and QGCH…KRMS.

This sequence belongs to the prickle / espinas / testin family. Interacts via LIM domain 1 with ZYX. Interacts (via LIM domain 3) with ENAH and VASP. Interacts with ALKBH4, talin, actin, alpha-actinin, GRIP1 and PXN. Interacts (via LIM domain 2) with ACTL7A (via N-terminus). Heterodimer with ACTL7A; the heterodimer interacts with ENAH to form a heterotrimer.

The protein resides in the cytoplasm. The protein localises to the cell junction. It is found in the focal adhesion. Its function is as follows. Scaffold protein that may play a role in cell adhesion, cell spreading and in the reorganization of the actin cytoskeleton. Plays a role in the regulation of cell proliferation. May act as a tumor suppressor. This chain is Testin (TES), found in Nomascus leucogenys (Northern white-cheeked gibbon).